The chain runs to 73 residues: Probable minor pilin MMP0528 (73 aa).

The propeptide occupies 1–10 (MLKKLYSKKG). Residues 11 to 19 (QVSMEMGIL) carry the QXSXEXXXL motif.

Post-translationally, the N-terminus is probably cleaved by the prepilin peptidase EppA, which recognizes the class III signal sequence.

It is found in the secreted. Its subcellular location is the cell surface. The protein localises to the fimbrium. This chain is Probable minor pilin MMP0528, found in Methanococcus maripaludis (strain DSM 14266 / JCM 13030 / NBRC 101832 / S2 / LL).